Here is a 213-residue protein sequence, read N- to C-terminus: Chloramphenicol acetyltransferase 3 (213 aa).

Residue His189 is the Proton acceptor of the active site.

This sequence belongs to the chloramphenicol acetyltransferase family. As to quaternary structure, homotrimer.

The enzyme catalyses chloramphenicol + acetyl-CoA = chloramphenicol 3-acetate + CoA. Its function is as follows. This enzyme is an effector of chloramphenicol resistance in bacteria. The chain is Chloramphenicol acetyltransferase 3 (cat3) from Escherichia coli.